Consider the following 368-residue polypeptide: MDKHTPLLPGDSVFSRCKTEDSRIKGYDPVISPALIQSELAASDETLAFVSDQRRQAADIIAGRDDRLLLIVGPCSLHDPVAAKEYAIRLQKEAIKHKKDLHIIMRAYLEKPRTTVGWKGLINDPDLDGSYNINKGIRVARRIFLELLETGVGIASEMLDTISPQYLADLICWGAIGARTTESQLHRELASGLSFPIGFKNATDGNIGIAIDAMNSSANPHHFLSVTKQGVVAIVTTTGNPDTHIILRGGKSGTNFDADSVAGAKAKLEECNKLPSIMIDCSHGNSSKNHKNQPKVAACIAEQVANGQKAITGVMIESHLNEGKQAIPEDDLSSMKYGVSVTDACIGWDDTTAVFEQLAAAVRSRRSH.

Belongs to the class-I DAHP synthase family.

It catalyses the reaction D-erythrose 4-phosphate + phosphoenolpyruvate + H2O = 7-phospho-2-dehydro-3-deoxy-D-arabino-heptonate + phosphate. It functions in the pathway metabolic intermediate biosynthesis; chorismate biosynthesis; chorismate from D-erythrose 4-phosphate and phosphoenolpyruvate: step 1/7. Functionally, stereospecific condensation of phosphoenolpyruvate (PEP) and D-erythrose-4-phosphate (E4P) giving rise to 3-deoxy-D-arabino-heptulosonate-7-phosphate (DAHP). In Schizosaccharomyces pombe (strain 972 / ATCC 24843) (Fission yeast), this protein is Putative phospho-2-dehydro-3-deoxyheptonate aldolase.